The sequence spans 415 residues: Probable tRNA pseudouridine synthase D (415 aa).

D83 (nucleophile) is an active-site residue. Residues 158–378 form the TRUD domain; it reads GFPNYFGYQR…PGRRRELLIR (221 aa).

The protein belongs to the pseudouridine synthase TruD family.

The catalysed reaction is uridine(13) in tRNA = pseudouridine(13) in tRNA. Could be responsible for synthesis of pseudouridine from uracil-13 in transfer RNAs. The polypeptide is Probable tRNA pseudouridine synthase D (Thermococcus gammatolerans (strain DSM 15229 / JCM 11827 / EJ3)).